The primary structure comprises 195 residues: Large ribosomal subunit protein bL25 (195 aa).

This sequence belongs to the bacterial ribosomal protein bL25 family. CTC subfamily. As to quaternary structure, part of the 50S ribosomal subunit; part of the 5S rRNA/L5/L18/L25 subcomplex. Contacts the 5S rRNA. Binds to the 5S rRNA independently of L5 and L18.

In terms of biological role, this is one of the proteins that binds to the 5S RNA in the ribosome where it forms part of the central protuberance. The chain is Large ribosomal subunit protein bL25 from Chlorobium chlorochromatii (strain CaD3).